A 325-amino-acid chain; its full sequence is Probable exonuclease subunit 1 (325 aa).

As to quaternary structure, could consist of two subunits: D13 and D12.

Functionally, possible exonuclease involved in phage DNA recombination, replication, and repair. The protein is Probable exonuclease subunit 1 (D12) of Escherichia coli (Enterobacteria phage T5).